A 163-amino-acid polypeptide reads, in one-letter code: MRDQQIIAAELENLGYTLVEIEREAGGLLRVTIENPDYERLISVLDCEKVSHQLSYALPVENIPYERLEISSPGLDRPVKSAADFERFTGMEVDLKLRVAAGNRKNFRGVLQGLLSGELNSPDAKFGLLFEGADGAESQLEFSLAEVDKTRLVPVIDFKGRKS.

The protein belongs to the RimP family.

The protein localises to the cytoplasm. Functionally, required for maturation of 30S ribosomal subunits. The protein is Ribosome maturation factor RimP of Polynucleobacter asymbioticus (strain DSM 18221 / CIP 109841 / QLW-P1DMWA-1) (Polynucleobacter necessarius subsp. asymbioticus).